The chain runs to 161 residues: Eukaryotic translation initiation factor 5A-2 (161 aa).

Position 54 is a hypusine (Lys-54).

The protein belongs to the eIF-5A family. Post-translationally, lys-54 undergoes hypusination, a unique post-translational modification that consists in the addition of a butylamino group from spermidine to lysine side chain and leads to the formation of a hypusine residue. eIF-5As are the only known proteins to undergo this modification, which is essential for their function. As to expression, expressed in the somatic tissues.

The protein localises to the cytoplasm. In terms of biological role, translation factor that promotes translation elongation and termination, particularly upon ribosome stalling at specific amino acid sequence contexts. Binds between the exit (E) and peptidyl (P) site of the ribosome and promotes rescue of stalled ribosome: specifically required for efficient translation of polyproline-containing peptides as well as other motifs that stall the ribosome. Acts as a ribosome quality control (RQC) cofactor by joining the RQC complex to facilitate peptidyl transfer during CAT tailing step. Acts in somatic tissues and its function in the soma is essential for normal growth and reproduction. This chain is Eukaryotic translation initiation factor 5A-2 (iff-2), found in Caenorhabditis elegans.